The sequence spans 729 residues: Fatty acid oxidation complex subunit alpha (729 aa).

An enoyl-CoA hydratase/isomerase region spans residues 1 to 189 (MLYKGDTLYL…KVGLVDAVVK (189 aa)). Aspartate 296 contacts substrate. Residues 311-729 (ETPKQAAVLG…AQPVGELQTA (419 aa)) are 3-hydroxyacyl-CoA dehydrogenase. NAD(+) is bound by residues methionine 324, aspartate 343, 400–402 (VVE), lysine 407, and serine 429. The active-site For 3-hydroxyacyl-CoA dehydrogenase activity is histidine 450. NAD(+) is bound at residue asparagine 453. Substrate is bound by residues asparagine 500 and tyrosine 660. The disordered stretch occupies residues 708-729 (SHNAPYYPQVEPAQPVGELQTA).

This sequence in the N-terminal section; belongs to the enoyl-CoA hydratase/isomerase family. It in the C-terminal section; belongs to the 3-hydroxyacyl-CoA dehydrogenase family. Heterotetramer of two alpha chains (FadB) and two beta chains (FadA).

It carries out the reaction a (3S)-3-hydroxyacyl-CoA + NAD(+) = a 3-oxoacyl-CoA + NADH + H(+). The catalysed reaction is a (3S)-3-hydroxyacyl-CoA = a (2E)-enoyl-CoA + H2O. It catalyses the reaction a 4-saturated-(3S)-3-hydroxyacyl-CoA = a (3E)-enoyl-CoA + H2O. The enzyme catalyses (3S)-3-hydroxybutanoyl-CoA = (3R)-3-hydroxybutanoyl-CoA. It carries out the reaction a (3Z)-enoyl-CoA = a 4-saturated (2E)-enoyl-CoA. The catalysed reaction is a (3E)-enoyl-CoA = a 4-saturated (2E)-enoyl-CoA. It functions in the pathway lipid metabolism; fatty acid beta-oxidation. Functionally, involved in the aerobic and anaerobic degradation of long-chain fatty acids via beta-oxidation cycle. Catalyzes the formation of 3-oxoacyl-CoA from enoyl-CoA via L-3-hydroxyacyl-CoA. It can also use D-3-hydroxyacyl-CoA and cis-3-enoyl-CoA as substrate. This chain is Fatty acid oxidation complex subunit alpha, found in Cronobacter sakazakii (strain ATCC BAA-894) (Enterobacter sakazakii).